Here is a 481-residue protein sequence, read N- to C-terminus: Aspartyl/glutamyl-tRNA(Asn/Gln) amidotransferase subunit B (481 aa).

Belongs to the GatB/GatE family. GatB subfamily. As to quaternary structure, heterotrimer of A, B and C subunits.

The catalysed reaction is L-glutamyl-tRNA(Gln) + L-glutamine + ATP + H2O = L-glutaminyl-tRNA(Gln) + L-glutamate + ADP + phosphate + H(+). It carries out the reaction L-aspartyl-tRNA(Asn) + L-glutamine + ATP + H2O = L-asparaginyl-tRNA(Asn) + L-glutamate + ADP + phosphate + 2 H(+). Its function is as follows. Allows the formation of correctly charged Asn-tRNA(Asn) or Gln-tRNA(Gln) through the transamidation of misacylated Asp-tRNA(Asn) or Glu-tRNA(Gln) in organisms which lack either or both of asparaginyl-tRNA or glutaminyl-tRNA synthetases. The reaction takes place in the presence of glutamine and ATP through an activated phospho-Asp-tRNA(Asn) or phospho-Glu-tRNA(Gln). This is Aspartyl/glutamyl-tRNA(Asn/Gln) amidotransferase subunit B from Pseudomonas syringae pv. tomato (strain ATCC BAA-871 / DC3000).